Reading from the N-terminus, the 127-residue chain is Large ribosomal subunit protein uL22 (127 aa).

This sequence belongs to the universal ribosomal protein uL22 family. In terms of assembly, part of the 50S ribosomal subunit.

Functionally, this protein binds specifically to 23S rRNA; its binding is stimulated by other ribosomal proteins, e.g. L4, L17, and L20. It is important during the early stages of 50S assembly. It makes multiple contacts with different domains of the 23S rRNA in the assembled 50S subunit and ribosome. Its function is as follows. The globular domain of the protein is located near the polypeptide exit tunnel on the outside of the subunit, while an extended beta-hairpin is found that lines the wall of the exit tunnel in the center of the 70S ribosome. This is Large ribosomal subunit protein uL22 from Rhizorhabdus wittichii (strain DSM 6014 / CCUG 31198 / JCM 15750 / NBRC 105917 / EY 4224 / RW1) (Sphingomonas wittichii).